The primary structure comprises 919 residues: Valine--tRNA ligase (919 aa).

The 'HIGH' region motif lies at 46-56 (PNVTGTLHMGH). A 'KMSKS' region motif is present at residues 528-532 (KMSKS). K531 serves as a coordination point for ATP. The stretch at 849–919 (LAGLVDIEAE…KTLEKKEALG (71 aa)) forms a coiled coil.

This sequence belongs to the class-I aminoacyl-tRNA synthetase family. ValS type 1 subfamily. As to quaternary structure, monomer.

It is found in the cytoplasm. The enzyme catalyses tRNA(Val) + L-valine + ATP = L-valyl-tRNA(Val) + AMP + diphosphate. Functionally, catalyzes the attachment of valine to tRNA(Val). As ValRS can inadvertently accommodate and process structurally similar amino acids such as threonine, to avoid such errors, it has a 'posttransfer' editing activity that hydrolyzes mischarged Thr-tRNA(Val) in a tRNA-dependent manner. The chain is Valine--tRNA ligase from Francisella tularensis subsp. tularensis (strain SCHU S4 / Schu 4).